The chain runs to 153 residues: UPF0260 protein YcgN (153 aa).

This sequence belongs to the UPF0260 family.

The chain is UPF0260 protein YcgN from Salmonella agona (strain SL483).